The primary structure comprises 439 residues: Dihydroorotase (439 aa).

Zn(2+) is bound by residues His73 and His75. Residues 75–77 and Asn107 each bind substrate; that span reads HLR. Zn(2+) is bound by residues Asp165, His192, and His245. Asn291 lines the substrate pocket. Asp318 is a Zn(2+) binding site. Residue Asp318 is part of the active site. His322 is a substrate binding site.

This sequence belongs to the metallo-dependent hydrolases superfamily. DHOase family. Class I DHOase subfamily. The cofactor is Zn(2+).

It carries out the reaction (S)-dihydroorotate + H2O = N-carbamoyl-L-aspartate + H(+). It functions in the pathway pyrimidine metabolism; UMP biosynthesis via de novo pathway; (S)-dihydroorotate from bicarbonate: step 3/3. Functionally, catalyzes the reversible cyclization of carbamoyl aspartate to dihydroorotate. This Syntrophobacter fumaroxidans (strain DSM 10017 / MPOB) protein is Dihydroorotase.